The chain runs to 512 residues: 2-isopropylmalate synthase (512 aa).

The region spanning 5–267 is the Pyruvate carboxyltransferase domain; it reads LYIFDTTLRD…DSRVDATQIV (263 aa). Residues Asp-14, His-202, His-204, and Asn-238 each contribute to the Mn(2+) site. The segment at 393 to 512 is regulatory domain; sequence KLVSLKVVSE…EEKMNAQAAA (120 aa).

This sequence belongs to the alpha-IPM synthase/homocitrate synthase family. LeuA type 1 subfamily. In terms of assembly, homodimer. It depends on Mn(2+) as a cofactor.

The protein resides in the cytoplasm. The enzyme catalyses 3-methyl-2-oxobutanoate + acetyl-CoA + H2O = (2S)-2-isopropylmalate + CoA + H(+). The protein operates within amino-acid biosynthesis; L-leucine biosynthesis; L-leucine from 3-methyl-2-oxobutanoate: step 1/4. Catalyzes the condensation of the acetyl group of acetyl-CoA with 3-methyl-2-oxobutanoate (2-ketoisovalerate) to form 3-carboxy-3-hydroxy-4-methylpentanoate (2-isopropylmalate). The polypeptide is 2-isopropylmalate synthase (Chromobacterium violaceum (strain ATCC 12472 / DSM 30191 / JCM 1249 / CCUG 213 / NBRC 12614 / NCIMB 9131 / NCTC 9757 / MK)).